A 260-amino-acid polypeptide reads, in one-letter code: CD40 ligand (260 aa).

Residues 1–22 (MIETYSQTAPRSVAPGPPVSMK) lie on the Cytoplasmic side of the membrane. The helical; Signal-anchor for type II membrane protein transmembrane segment at 23 to 46 (IFMYLLTVFLITQMIGSALFAVYL) threads the bilayer. Topologically, residues 47–260 (HRRLDKIEDE…GFTSFGLLKL (214 aa)) are extracellular. Residues 121 to 260 (VAAHVISEAS…GFTSFGLLKL (140 aa)) enclose the THD domain. An intrachain disulfide couples Cys177 to Cys217. N-linked (GlcNAc...) asparagine glycosylation occurs at Asn239.

The protein belongs to the tumor necrosis factor family. As to quaternary structure, homotrimer. Interacts with CD28. CD40 ligand, soluble form: Exists as either a monomer or a homotrimer. Forms a ternary complex between CD40 and integrins for CD40-CD40LG signaling. The soluble form derives from the membrane form by proteolytic processing.

The protein localises to the cell membrane. It localises to the cell surface. It is found in the secreted. Functionally, cytokine that acts as a ligand to CD40/TNFRSF5. Costimulates T-cell proliferation and cytokine production. Its cross-linking on T-cells generates a costimulatory signal which enhances the production of IL4 and IL10 in conjunction with the TCR/CD3 ligation and CD28 costimulation. Induces the activation of NF-kappa-B. Induces the activation of kinases MAPK8 and PAK2 in T-cells. Mediates B-cell proliferation in the absence of co-stimulus as well as IgE production in the presence of IL4. Involved in immunoglobulin class switching. In terms of biological role, acts as a ligand for integrins, specifically ITGA5:ITGB1 and ITGAV:ITGB3; both integrins and the CD40 receptor are required for activation of CD40-CD40LG signaling, which have cell-type dependent effects, such as B-cell activation, NF-kappa-B signaling and anti-apoptotic signaling. This is CD40 ligand (CD40LG) from Felis catus (Cat).